A 181-amino-acid polypeptide reads, in one-letter code: Succinate dehydrogenase [ubiquinone] cytochrome b small subunit, mitochondrial (181 aa).

The N-terminal 31 residues, 1-31 (MMLPRSMKFMTGRRIFHTATVRAFQSTAKKS), are a transit peptide targeting the mitochondrion. Residues 32 to 66 (LTIPFLPVLPQKPGGVRGTPNDAYVPPPENKLEGS) are Mitochondrial matrix-facing. Residues 67-88 (YHWYMEKIFALSVVPLATTAML) traverse the membrane as a helical segment. The Mitochondrial intermembrane portion of the chain corresponds to 89–98 (TTGPLSTAAD). A helical membrane pass occupies residues 99–118 (SFFSVMLLGYCYMEFNSCIT). Position 109 (Cys-109) interacts with heme. The Mitochondrial matrix segment spans residues 119–127 (DYISERVYG). Tyr-120 provides a ligand contact to a ubiquinone. Residues 128–148 (VWHKYAMYMLGLGSAVSLFGI) form a helical membrane-spanning segment. Topologically, residues 149-181 (YKLETENDGVVGLVKSLWDSSEKDNSQKIEAKK) are mitochondrial intermembrane.

This sequence belongs to the CybS family. Forms part of complex II containing four subunits: a flavoprotein (FP), an iron-sulfur protein (IP) and a cytochrome b composed of a large and a small subunit.

It localises to the mitochondrion inner membrane. It functions in the pathway carbohydrate metabolism; tricarboxylic acid cycle. Functionally, membrane-anchoring subunit of succinate dehydrogenase (SDH) that is involved in system II of the mitochondrial electron transport chain and is responsible for transferring electrons from succinate to ubiquinone (coenzyme Q). SDH3 and SDH4 form the membrane dimer that anchors the catalytic dimer formed by SDH1 and SDH2 to the matrix surface of the mitochondrial inner membrane. Electrons originating from the catalytic dimer enter the membrane dimer for ubiquinone reduction. The polypeptide is Succinate dehydrogenase [ubiquinone] cytochrome b small subunit, mitochondrial (SDH4) (Saccharomyces cerevisiae (strain ATCC 204508 / S288c) (Baker's yeast)).